The sequence spans 167 residues: NAD(P)H-quinone oxidoreductase subunit I, chloroplastic (167 aa).

4Fe-4S ferredoxin-type domains lie at 55 to 84 and 95 to 124; these read GRIH…VDWK and LNYS…MTEE. Residues Cys-64, Cys-67, Cys-70, Cys-74, Cys-104, Cys-107, Cys-110, and Cys-114 each coordinate [4Fe-4S] cluster.

Belongs to the complex I 23 kDa subunit family. NDH is composed of at least 16 different subunits, 5 of which are encoded in the nucleus. [4Fe-4S] cluster is required as a cofactor.

It is found in the plastid. It localises to the chloroplast thylakoid membrane. It catalyses the reaction a plastoquinone + NADH + (n+1) H(+)(in) = a plastoquinol + NAD(+) + n H(+)(out). It carries out the reaction a plastoquinone + NADPH + (n+1) H(+)(in) = a plastoquinol + NADP(+) + n H(+)(out). Its function is as follows. NDH shuttles electrons from NAD(P)H:plastoquinone, via FMN and iron-sulfur (Fe-S) centers, to quinones in the photosynthetic chain and possibly in a chloroplast respiratory chain. The immediate electron acceptor for the enzyme in this species is believed to be plastoquinone. Couples the redox reaction to proton translocation, and thus conserves the redox energy in a proton gradient. This Arabis hirsuta (Hairy rock-cress) protein is NAD(P)H-quinone oxidoreductase subunit I, chloroplastic.